The chain runs to 209 residues: MNQKPPPYGYGGAGGGGVGPSSTSNTTIIGTLSARAKQTTQSMITTLRPWREILDLSALSLPRGYDEAMAHLKHNISYFRGNYALAVLAIVFLGLIYHPMSMIAFIVVFIGWILLYFSRDANDSIVISGKEVDDKIVLVLLSLVTVLALVYTDVGENVLVSLIIGLLIVGAHGAFRNTDDLFLDEESARRGGLVSAGSGNRPPSSYTPI.

A disordered region spans residues 1–20 (MNQKPPPYGYGGAGGGGVGP). Positions 9–19 (GYGGAGGGGVG) are enriched in gly residues. Helical transmembrane passes span 90-110 (IVFL…VVFI), 132-152 (VDDK…LVYT), and 155-175 (GENV…HGAF).

It belongs to the PRA1 family. In terms of assembly, interacts with PRA1B1, PRA1B2, PRA1B3, PRA1B4, PRA1B5 and PRA1B6. As to expression, expressed in hypocotyls, roots, lateral roots, columella cells, leaves and shoot apex.

The protein localises to the endosome membrane. In terms of biological role, may be involved in both secretory and endocytic intracellular trafficking in the endosomal/prevacuolar compartments. This chain is PRA1 family protein E (PRA1E), found in Arabidopsis thaliana (Mouse-ear cress).